Reading from the N-terminus, the 341-residue chain is S-adenosylmethionine:tRNA ribosyltransferase-isomerase (341 aa).

This sequence belongs to the QueA family. Monomer.

The protein localises to the cytoplasm. It catalyses the reaction 7-aminomethyl-7-carbaguanosine(34) in tRNA + S-adenosyl-L-methionine = epoxyqueuosine(34) in tRNA + adenine + L-methionine + 2 H(+). It participates in tRNA modification; tRNA-queuosine biosynthesis. Functionally, transfers and isomerizes the ribose moiety from AdoMet to the 7-aminomethyl group of 7-deazaguanine (preQ1-tRNA) to give epoxyqueuosine (oQ-tRNA). The sequence is that of S-adenosylmethionine:tRNA ribosyltransferase-isomerase from Pelodictyon phaeoclathratiforme (strain DSM 5477 / BU-1).